We begin with the raw amino-acid sequence, 82 residues long: Penaeidin-3f (82 aa).

An N-terminal signal peptide occupies residues 1 to 19; it reads MRLVACLVFLASFALVCQG. The residue at position 20 (Gln-20) is a Pyrrolidone carboxylic acid. Intrachain disulfides connect Cys-51/Cys-66, Cys-55/Cys-73, and Cys-67/Cys-74. The residue at position 81 (Ser-81) is a Serine amide.

The protein belongs to the penaeidin family.

The protein localises to the cytoplasmic granule. Functionally, antibacterial and antifungal activity. Presents chitin-binding activity. This chain is Penaeidin-3f, found in Penaeus vannamei (Whiteleg shrimp).